We begin with the raw amino-acid sequence, 369 residues long: Anhydro-N-acetylmuramic acid kinase (369 aa).

12 to 19 (GTSLDGVD) contacts ATP.

It belongs to the anhydro-N-acetylmuramic acid kinase family.

The enzyme catalyses 1,6-anhydro-N-acetyl-beta-muramate + ATP + H2O = N-acetyl-D-muramate 6-phosphate + ADP + H(+). Its pathway is amino-sugar metabolism; 1,6-anhydro-N-acetylmuramate degradation. It functions in the pathway cell wall biogenesis; peptidoglycan recycling. Functionally, catalyzes the specific phosphorylation of 1,6-anhydro-N-acetylmuramic acid (anhMurNAc) with the simultaneous cleavage of the 1,6-anhydro ring, generating MurNAc-6-P. Is required for the utilization of anhMurNAc either imported from the medium or derived from its own cell wall murein, and thus plays a role in cell wall recycling. The sequence is that of Anhydro-N-acetylmuramic acid kinase from Escherichia coli (strain K12 / MC4100 / BW2952).